We begin with the raw amino-acid sequence, 256 residues long: Zinc import ATP-binding protein ZnuC (256 aa).

An ABC transporter domain is found at 6-221; that stretch reads IAAEGLSIRV…PEYRALFGTG (216 aa). Position 38 to 45 (38 to 45) interacts with ATP; sequence GPNGSGKS. The disordered stretch occupies residues 237-256; sequence HDDDCGHDHGAEHMHPHGDR.

The protein belongs to the ABC transporter superfamily. Zinc importer (TC 3.A.1.15.5) family. As to quaternary structure, the complex is composed of two ATP-binding proteins (ZnuC), two transmembrane proteins (ZnuB) and a solute-binding protein (ZnuA).

It is found in the cell inner membrane. The catalysed reaction is Zn(2+)(out) + ATP(in) + H2O(in) = Zn(2+)(in) + ADP(in) + phosphate(in) + H(+)(in). In terms of biological role, part of the ABC transporter complex ZnuABC involved in zinc import. Responsible for energy coupling to the transport system. In Ruegeria pomeroyi (strain ATCC 700808 / DSM 15171 / DSS-3) (Silicibacter pomeroyi), this protein is Zinc import ATP-binding protein ZnuC.